A 292-amino-acid chain; its full sequence is S-adenosyl-L-methionine-dependent Diels-Alderase iccD (292 aa).

A helical transmembrane segment spans residues 240–262 (LPVVRMFYVVLLVPYLFVRLLGI).

The protein belongs to the class I-like SAM-binding methyltransferase superfamily. Erg6/SMT family. S-adenosyl-L-methionine serves as cofactor.

Its subcellular location is the membrane. It carries out the reaction 3-[(2E,4E,8S,10E,12Z)-4,8-dimethyltetradeca-2,4,10,12-tetraenoyl]-4-hydroxy-5-(4-hydroxyphenyl)-1,2-dihydropyridin-2-one = 8-epi-ilicicolin H. It functions in the pathway mycotoxin biosynthesis. In terms of biological role, S-adenosyl-l-methionine-dependent Diels-Alderase; part of the gene cluster that mediates the biosynthesis of ilicicolin H, a 4-hydroxy-2-pyridonealkaloid that has potent and broad antifungal activities by inhibiting the mitochondrial respiration chain. IccD catalyzes the Diels-Alder reaction that converts the acyclic 2-pyridone intermediate to 8-epi-ilicicolin H. The biosynthesis of ilicicolin H starts with formation of the tetramic acid by the hybrid PKS-NRPS synthetase iccA with the partnering trans-enoyl reductase iccB since iccA lacks a designated enoylreductase (ER) domain. The cytochrome P450 monooxygenase iccC then catalyzes the ring expansion of the tetramate to the acyclic 2-pyridone. The pericyclase iccD further converts the acyclic 2-pyridone into 8-epi-ilicicolin H. Finally, the epimerase iccE converts 8-epi-ilicicolin H into ilicicolin H via epimerization. IccA to iccE are sufficient for ilicicolin H biosynthesis and the roles of the remaining enzymes, iccF, iccG and iccH within the pathway have still to be determined. This Talaromyces variabilis (Penicillium variabile) protein is S-adenosyl-L-methionine-dependent Diels-Alderase iccD.